The following is a 133-amino-acid chain: ATP synthase epsilon chain, chloroplastic (133 aa).

This sequence belongs to the ATPase epsilon chain family. As to quaternary structure, F-type ATPases have 2 components, CF(1) - the catalytic core - and CF(0) - the membrane proton channel. CF(1) has five subunits: alpha(3), beta(3), gamma(1), delta(1), epsilon(1). CF(0) has three main subunits: a, b and c.

It localises to the plastid. Its subcellular location is the chloroplast thylakoid membrane. Functionally, produces ATP from ADP in the presence of a proton gradient across the membrane. This Morus indica (Mulberry) protein is ATP synthase epsilon chain, chloroplastic.